The chain runs to 375 residues: Alcohol dehydrogenase 1 (375 aa).

Ser-1 bears the N-acetylserine mark. Residues Cys-46, His-67, Cys-97, Cys-100, Cys-103, Cys-111, and Cys-175 each coordinate Zn(2+). NAD(+)-binding positions include 200–205, Asp-224, Lys-229, 293–295, and Arg-370; these read GLGGVG and VGV.

Belongs to the zinc-containing alcohol dehydrogenase family. Class-I subfamily. In terms of assembly, homodimer. It depends on Zn(2+) as a cofactor.

The protein resides in the cytoplasm. The catalysed reaction is a primary alcohol + NAD(+) = an aldehyde + NADH + H(+). The enzyme catalyses a secondary alcohol + NAD(+) = a ketone + NADH + H(+). This is Alcohol dehydrogenase 1 (ADH1) from Coturnix japonica (Japanese quail).